A 348-amino-acid chain; its full sequence is Putative zinc metalloprotease HP_0258 (348 aa).

Histidine 16 provides a ligand contact to Zn(2+). Residue glutamate 17 is part of the active site. Position 20 (histidine 20) interacts with Zn(2+). Helical transmembrane passes span 43 to 63, 93 to 113, 247 to 267, 275 to 295, and 324 to 344; these read CFFK…GGYV, WILF…YFFL, LIMG…VGAL, MLLL…LLPI, and LWLA…FNDL. The PDZ domain maps to 106–175; it reads AILVYFFLAL…GELVLEIERN (70 aa).

Belongs to the peptidase M50B family. The cofactor is Zn(2+).

The protein localises to the cell inner membrane. The chain is Putative zinc metalloprotease HP_0258 from Helicobacter pylori (strain ATCC 700392 / 26695) (Campylobacter pylori).